The following is a 403-amino-acid chain: Aromatic-L-amino-acid decarboxylase (403 aa).

A substrate-binding site is contributed by Thr-8. Residues Ala-74 and Ser-75 each coordinate pyridoxal 5'-phosphate. His-118 serves as a coordination point for substrate. His-118 is a catalytic residue. Asp-197 and Asn-226 together coordinate pyridoxal 5'-phosphate. The residue at position 229 (Lys-229) is an N6-(pyridoxal phosphate)lysine. A disordered region spans residues 250–276; sequence NAFNVDPLYLKHDMQGSAPDYRHWQIP.

This sequence belongs to the group II decarboxylase family. As to quaternary structure, homodimer. Pyridoxal 5'-phosphate serves as cofactor.

It carries out the reaction L-dopa + H(+) = dopamine + CO2. It catalyses the reaction 5-hydroxy-L-tryptophan + H(+) = serotonin + CO2. In terms of biological role, catalyzes the decarboxylation of L-3,4-dihydroxyphenylalanine (L-DOPA) to dopamine and L-5-hydroxytryptophan (5-HTP) to serotonin. Catalyzes the formation of serotonin more efficiently than dopamine. Displays no activity to tyrosine. Variation in the synthesis of bioamines may be a factor contributing to natural variation in life span. The protein is Aromatic-L-amino-acid decarboxylase (Ddc) of Drosophila lebanonensis (Fruit fly).